The chain runs to 158 residues: SsrA-binding protein (158 aa).

The segment at 131–158 is disordered; it reads GKKTHDKRETEKKRDWNREKARLLRDRG. The segment covering 136–158 has biased composition (basic and acidic residues); the sequence is DKRETEKKRDWNREKARLLRDRG.

It belongs to the SmpB family.

It is found in the cytoplasm. In terms of biological role, required for rescue of stalled ribosomes mediated by trans-translation. Binds to transfer-messenger RNA (tmRNA), required for stable association of tmRNA with ribosomes. tmRNA and SmpB together mimic tRNA shape, replacing the anticodon stem-loop with SmpB. tmRNA is encoded by the ssrA gene; the 2 termini fold to resemble tRNA(Ala) and it encodes a 'tag peptide', a short internal open reading frame. During trans-translation Ala-aminoacylated tmRNA acts like a tRNA, entering the A-site of stalled ribosomes, displacing the stalled mRNA. The ribosome then switches to translate the ORF on the tmRNA; the nascent peptide is terminated with the 'tag peptide' encoded by the tmRNA and targeted for degradation. The ribosome is freed to recommence translation, which seems to be the essential function of trans-translation. This is SsrA-binding protein from Brucella ovis (strain ATCC 25840 / 63/290 / NCTC 10512).